The chain runs to 353 residues: Paraneoplastic antigen Ma1 homolog (353 aa).

It belongs to the PNMA family. As to expression, predominantly expressed in testis. Very low levels in the brain, including in the piriform cortex, hippocampus and some subcortical nuclei.

It is found in the nucleus. The protein resides in the nucleolus. The protein is Paraneoplastic antigen Ma1 homolog (Pnma1) of Mus musculus (Mouse).